The following is a 203-amino-acid chain: Octanoyltransferase (203 aa).

The BPL/LPL catalytic domain occupies 30 to 203 (EDQDNYFFIT…HIIKEGRKLV (174 aa)). Substrate-binding positions include 69-76 (RGGSVTFH), 135-137 (SVG), and 148-150 (GIS). C166 serves as the catalytic Acyl-thioester intermediate.

Belongs to the LipB family.

Its subcellular location is the cytoplasm. The enzyme catalyses octanoyl-[ACP] + L-lysyl-[protein] = N(6)-octanoyl-L-lysyl-[protein] + holo-[ACP] + H(+). It functions in the pathway protein modification; protein lipoylation via endogenous pathway; protein N(6)-(lipoyl)lysine from octanoyl-[acyl-carrier-protein]: step 1/2. Its function is as follows. Catalyzes the transfer of endogenously produced octanoic acid from octanoyl-acyl-carrier-protein onto the lipoyl domains of lipoate-dependent enzymes. Lipoyl-ACP can also act as a substrate although octanoyl-ACP is likely to be the physiological substrate. The polypeptide is Octanoyltransferase (Persephonella marina (strain DSM 14350 / EX-H1)).